Reading from the N-terminus, the 157-residue chain is Large ribosomal subunit protein uL22 (157 aa).

The protein belongs to the universal ribosomal protein uL22 family. Part of the 50S ribosomal subunit.

Functionally, this protein binds specifically to 23S rRNA. It makes multiple contacts with different domains of the 23S rRNA in the assembled 50S subunit and ribosome. The globular domain of the protein is located near the polypeptide exit tunnel on the outside of the subunit, while an extended beta-hairpin is found that lines the wall of the exit tunnel in the center of the 70S ribosome. The protein is Large ribosomal subunit protein uL22 of Methanocorpusculum labreanum (strain ATCC 43576 / DSM 4855 / Z).